A 583-amino-acid polypeptide reads, in one-letter code: MLO-like protein 6 (583 aa).

Over 1 to 15 the chain is Extracellular; that stretch reads MADQVKEKTLEETST. Residues 16–36 form a helical membrane-spanning segment; that stretch reads WAVAVVCFVLLLISIVIEKLI. Over 37–61 the chain is Cytoplasmic; the sequence is HKIGSWFKKKNKKALYEALEKVKAE. A helical transmembrane segment spans residues 62–82; it reads LMLMGFISLLLTIGQGYISNI. Over 83–161 the chain is Extracellular; that stretch reads CIPKNIAASM…VSAYGMHQLH (79 aa). Residues 162–182 form a helical membrane-spanning segment; sequence IFIFVLAVCHVIYCIVTYALG. Residues 183-284 are Cytoplasmic-facing; it reads KTKMRRWKKW…KYIQRSLEED (102 aa). Residues 285–305 form a helical membrane-spanning segment; sequence FKTIVEINPVIWFIAVLFLLT. The Extracellular portion of the chain corresponds to 306–314; that stretch reads NTNGLNSYL. The helical transmembrane segment at 315-335 threads the bilayer; it reads WLPFIPFIVILIVGTKLQVII. Topologically, residues 336–368 are cytoplasmic; the sequence is TKLGLRIQEKGDVVKGTPLVQPGDHFFWFGRPR. The chain crosses the membrane as a helical span at residues 369–389; that stretch reads FILFLIHLVLFTNAFQLAFFV. At 390-411 the chain is on the extracellular side; it reads WSTYEFGLKNCFHESRVDVIIR. A helical transmembrane segment spans residues 412-432; sequence ISIGLLVQILCSYVTLPLYAL. The Cytoplasmic portion of the chain corresponds to 433–583; it reads VTQMGSKMKP…ISLRDFSFKR (151 aa). Residues 447–468 form a calmodulin-binding region; that stretch reads ERVATALKSWHHTAKKNIKHGR. The disordered stretch occupies residues 461 to 583; sequence KKNIKHGRTS…ISLRDFSFKR (123 aa). A compositionally biased stretch (low complexity) spans 470-484; that stretch reads SESTTPFSSRPTTPT. Basic and acidic residues predominate over residues 541-551; the sequence is RFGEEESEKKF.

This sequence belongs to the MLO family.

It is found in the membrane. Functionally, may be involved in modulation of pathogen defense and leaf cell death. Activity seems to be regulated by Ca(2+)-dependent calmodulin binding and seems not to require heterotrimeric G proteins. This is MLO-like protein 6 (MLO6) from Arabidopsis thaliana (Mouse-ear cress).